A 212-amino-acid chain; its full sequence is Mediator of RNA polymerase II transcription subunit 20 (212 aa).

This sequence belongs to the Mediator complex subunit 20 family. As to quaternary structure, interacts with PPARG. Component of the Mediator complex, which is composed of MED1, MED4, MED6, MED7, MED8, MED9, MED10, MED11, MED12, MED13, MED13L, MED14, MED15, MED16, MED17, MED18, MED19, MED20, MED21, MED22, MED23, MED24, MED25, MED26, MED27, MED29, MED30, MED31, CCNC, CDK8 and CDC2L6/CDK11. The MED12, MED13, CCNC and CDK8 subunits form a distinct module termed the CDK8 module. Mediator containing the CDK8 module is less active than Mediator lacking this module in supporting transcriptional activation. Individual preparations of the Mediator complex lacking one or more distinct subunits have been variously termed ARC, CRSP, DRIP, PC2, SMCC and TRAP.

It is found in the nucleus. Component of the Mediator complex, a coactivator involved in the regulated transcription of nearly all RNA polymerase II-dependent genes. Mediator functions as a bridge to convey information from gene-specific regulatory proteins to the basal RNA polymerase II transcription machinery. Mediator is recruited to promoters by direct interactions with regulatory proteins and serves as a scaffold for the assembly of a functional preinitiation complex with RNA polymerase II and the general transcription factors. The polypeptide is Mediator of RNA polymerase II transcription subunit 20 (MED20) (Homo sapiens (Human)).